Consider the following 573-residue polypeptide: Probable pectinesterase/pectinesterase inhibitor 41 (573 aa).

Positions 1–22 (MLSLKLFLVTLFLSLQTLFIAS) are cleaved as a signal peptide. The pectinesterase inhibitor 41 stretch occupies residues 25-184 (LLPSNSSSTI…TKLFSVSLAL (160 aa)). 7 N-linked (GlcNAc...) asparagine glycosylation sites follow: N29, N119, N173, N264, N268, N281, and N320. Positions 259-557 (VTVNQNGTGN…FTVENFLLGD (299 aa)) are pectinesterase 41. Substrate is bound at residue T336. N-linked (GlcNAc...) asparagine glycosylation occurs at N353. Position 366 (Q366) interacts with substrate. D389 acts as the Proton donor; for pectinesterase activity in catalysis. A disulfide bond links C403 and C423. D410 serves as the catalytic Nucleophile; for pectinesterase activity. N456 and N469 each carry an N-linked (GlcNAc...) asparagine glycan. Substrate contacts are provided by R478 and W480. N-linked (GlcNAc...) asparagine glycosylation is found at N520, N541, and N547.

It in the N-terminal section; belongs to the PMEI family. In the C-terminal section; belongs to the pectinesterase family. Expressed in flowers, siliques, floral stems and rosettes leaves.

It is found in the secreted. Its subcellular location is the cell wall. The enzyme catalyses [(1-&gt;4)-alpha-D-galacturonosyl methyl ester](n) + n H2O = [(1-&gt;4)-alpha-D-galacturonosyl](n) + n methanol + n H(+). Its pathway is glycan metabolism; pectin degradation; 2-dehydro-3-deoxy-D-gluconate from pectin: step 1/5. Acts in the modification of cell walls via demethylesterification of cell wall pectin. This chain is Probable pectinesterase/pectinesterase inhibitor 41 (PME41), found in Arabidopsis thaliana (Mouse-ear cress).